The primary structure comprises 189 residues: 3-hydroxyanthranilate 3,4-dioxygenase (189 aa).

An O2-binding site is contributed by arginine 50. Fe cation contacts are provided by histidine 54, glutamate 60, and histidine 102. Glutamate 60 serves as a coordination point for substrate. Substrate contacts are provided by arginine 106 and glutamate 116. Residues cysteine 131, cysteine 136, cysteine 170, and cysteine 173 each coordinate a divalent metal cation.

This sequence belongs to the 3-HAO family. The cofactor is Fe(2+).

The protein resides in the cytoplasm. The catalysed reaction is 3-hydroxyanthranilate + O2 = (2Z,4Z)-2-amino-3-carboxymuconate 6-semialdehyde. It participates in cofactor biosynthesis; NAD(+) biosynthesis; quinolinate from L-kynurenine: step 3/3. In terms of biological role, catalyzes the oxidative ring opening of 3-hydroxyanthranilate to 2-amino-3-carboxymuconate semialdehyde, which spontaneously cyclizes to quinolinate. The chain is 3-hydroxyanthranilate 3,4-dioxygenase (bna1) from Aspergillus niger (strain ATCC MYA-4892 / CBS 513.88 / FGSC A1513).